A 576-amino-acid chain; its full sequence is Calmodulin-binding protein 60 B (576 aa).

A disordered region spans residues 1–25; it reads MMLPTKRPAPDHGDDERNEVMVPEP. The tract at residues 1-80 is calmodulin-binding; that stretch reads MMLPTKRPAP…HPSSRPSLNR (80 aa). A compositionally biased stretch (basic and acidic residues) spans 8–25; sequence PAPDHGDDERNEVMVPEP. The tract at residues 150–273 is DNA-binding; the sequence is DERQDWTENE…AFHKRLAYKN (124 aa).

It belongs to the plant ACBP60 protein family. In terms of assembly, (Microbial infection) Interacts with V.dahliae SCP41. As to quaternary structure, interacts with calmodulin (CaM).

Its subcellular location is the nucleus. Transcription activator that binds DNA in a sequence-specific manner, likely 5'-GAAATTTTGG-3', to promote the expression of target genes. Required for pathogen resistance. The chain is Calmodulin-binding protein 60 B from Gossypium hirsutum (Upland cotton).